A 195-amino-acid polypeptide reads, in one-letter code: Interferon tau-1 (195 aa).

A signal peptide spans 1 to 23 (MAFVLSLLMALVLVSYGPGGSLG). Cystine bridges form between Cys-24–Cys-122 and Cys-52–Cys-162.

The protein belongs to the alpha/beta interferon family. IFN-alphaII subfamily. Constitutively and exclusively expressed in the mononuclear cells of the extraembryonic trophectoderm.

The protein localises to the secreted. Paracrine hormone primarily responsible for maternal recognition of pregnancy. Interacts with endometrial receptors, probably type I interferon receptors, and blocks estrogen receptor expression, preventing the estrogen-induced increase in oxytocin receptor expression in the endometrium. This results in the suppression of the pulsatile endometrial release of the luteolytic hormone prostaglandin F2-alpha, hindering the regression of the corpus luteum (luteolysis) and therefore a return to ovarian cyclicity. This, and a possible direct effect of IFN-tau on prostaglandin synthesis, leads in turn to continued ovarian progesterone secretion, which stimulates the secretion by the endometrium of the nutrients required for the growth of the conceptus. In summary, displays particularly high antiviral and antiproliferative potency concurrently with particular weak cytotoxicity, high antiluteolytic activity and immunomodulatory properties. In contrast with other IFNs, IFN-tau is not virally inducible. In Ovis aries (Sheep), this protein is Interferon tau-1 (IFNT1).